The sequence spans 346 residues: Heterogeneous nuclear ribonucleoprotein A1 (346 aa).

2 RRM domains span residues 23 to 123 (RKIF…GVRE) and 114 to 191 (KRLY…KGLS). 2 stretches are compositionally biased toward basic and acidic residues: residues 92-107 (TVDPKRAVPRDDKNRS) and 189-215 (GLSKDEMSKAQMNRDRETRGGRSRDGQ). Disordered stretches follow at residues 92–111 (TVDPKRAVPRDDKNRSESNV) and 189–346 (GLSK…NRNY). Composition is skewed to gly residues over residues 216–296 (RGGY…GWGG) and 303–331 (GGWGGPQQGGGGGGWGGQGQQQGGWGGQS). Residues 332–346 (GAQQWAHAQGGNRNY) are compositionally biased toward low complexity.

It is found in the nucleus. It localises to the chromosome. Its subcellular location is the telomere. Its function is as follows. This protein is a component of ribonucleosomes. Overexpression gradually increases telomere length, leading to increase lifespan. The sequence is that of Heterogeneous nuclear ribonucleoprotein A1 from Caenorhabditis elegans.